Here is a 562-residue protein sequence, read N- to C-terminus: Serine/threonine-protein kinase dst3 (562 aa).

A Protein kinase domain is found at 23–285 (FQIVEVVGSG…AQQLLSHPFI (263 aa)). Residues 29 to 37 (VGSGSFGTV) and Lys-59 contribute to the ATP site. The active-site Proton acceptor is Asp-154. Disordered regions lie at residues 316–339 (LEEQEQQRNSSGSKMVSSVPTRAS) and 366–562 (SIMR…NVNI). The span at 322–339 (QRNSSGSKMVSSVPTRAS) shows a compositional bias: polar residues. Composition is skewed to low complexity over residues 421-431 (NNNNNNNNTTT), 442-454 (QQQQQQQQQNNNK), and 476-494 (TTPTTPTTTQPNTSTTTKT). Over residues 495–522 (GSSLNIKPTNNVNRSTISIGQQKSPLQS) the composition is skewed to polar residues. Residues 542 to 562 (EDEEDEEEFNHEDYEEINVNI) are compositionally biased toward acidic residues.

The protein belongs to the protein kinase superfamily. STE Ser/Thr protein kinase family. STE20 subfamily. It depends on Mg(2+) as a cofactor.

The enzyme catalyses L-seryl-[protein] + ATP = O-phospho-L-seryl-[protein] + ADP + H(+). It carries out the reaction L-threonyl-[protein] + ATP = O-phospho-L-threonyl-[protein] + ADP + H(+). This is Serine/threonine-protein kinase dst3 from Dictyostelium discoideum (Social amoeba).